Reading from the N-terminus, the 578-residue chain is Suppressor of smlA (578 aa).

Functionally, involved in regulation of group size of aggregation streams. The chain is Suppressor of smlA (sslA1) from Dictyostelium discoideum (Social amoeba).